Consider the following 173-residue polypeptide: Putative C-type lectin protein FPV198 (173 aa).

Positions 50 to 169 (GMSGWVQINN…CNKKHTGICF (120 aa)) constitute a C-type lectin domain.

The chain is Putative C-type lectin protein FPV198 from Vertebrata (FPV).